The following is a 203-amino-acid chain: bMERB domain-containing protein 1 (203 aa).

Residues 3–149 (LKQSLSVHLE…EQEEDKEMAD (147 aa)) enclose the bMERB domain. The tract at residues 161–184 (VTKTSASSRAEKKAEPPPSKPTVA) is disordered.

The protein is bMERB domain-containing protein 1 (Bmerb1) of Mus musculus (Mouse).